The sequence spans 97 residues: Sec-independent protein translocase protein TatA (97 aa).

The chain crosses the membrane as a helical span at residues 1-21 (MGFNIWSLLIILLIVALLFGT). The interval 28 to 97 (GGDLGGAIRG…SAEHHDRSTS (70 aa)) is disordered. Residues 37-56 (GFKESMREGEEEEAQKRADG) show a composition bias toward basic and acidic residues. Residues 78-87 (QARESSSARQ) are compositionally biased toward low complexity. Basic and acidic residues predominate over residues 88–97 (SAEHHDRSTS).

The protein belongs to the TatA/E family. In terms of assembly, the Tat system comprises two distinct complexes: a TatABC complex, containing multiple copies of TatA, TatB and TatC subunits, and a separate TatA complex, containing only TatA subunits. Substrates initially bind to the TatABC complex, which probably triggers association of the separate TatA complex to form the active translocon.

It is found in the cell inner membrane. Functionally, part of the twin-arginine translocation (Tat) system that transports large folded proteins containing a characteristic twin-arginine motif in their signal peptide across membranes. TatA could form the protein-conducting channel of the Tat system. The sequence is that of Sec-independent protein translocase protein TatA from Halorhodospira halophila (strain DSM 244 / SL1) (Ectothiorhodospira halophila (strain DSM 244 / SL1)).